Reading from the N-terminus, the 379-residue chain is uncharacterized protein (379 aa).

Disordered stretches follow at residues Met1–Lys25, Gln128–Thr158, and Thr355–Ile379. Residues Gln128 to Ile141 show a composition bias toward polar residues.

This is an uncharacterized protein from Caenorhabditis elegans.